The following is a 99-amino-acid chain: uncharacterized protein (99 aa).

The disordered stretch occupies residues 1–99 (MSDFPPSYQQ…KYHSKSDVGF (99 aa)). A compositionally biased stretch (polar residues) spans 19 to 29 (QESSTSNNASE).

This is an uncharacterized protein from Schizosaccharomyces pombe (strain 972 / ATCC 24843) (Fission yeast).